Here is a 1320-residue protein sequence, read N- to C-terminus: Protein brunelleschi (1320 aa).

Residues 313–411 are disordered; it reads HRNSSLQEAG…IPGHQRNGDL (99 aa). Residues 314–327 show a composition bias toward polar residues; it reads RNSSLQEAGTSPLK. Position 317 is a phosphoserine (Ser317). A Phosphothreonine modification is found at Thr329. The span at 329 to 340 shows a compositional bias: basic and acidic residues; sequence TPEKWRASDATK. Residues 345 to 361 are compositionally biased toward polar residues; that stretch reads SDATANNVDSNQPQQRV. Residues 362–400 show a composition bias toward low complexity; the sequence is TSNSSSCSSVSSLVTTATNSSASDTPTTSSSSTSTISAA. A Phosphoserine modification is found at Ser672. Residues 923 to 954 are disordered; sequence VSTSGHASLPSRVGSPHHRRNEPQNSSFRSTI. Residues 945-954 are compositionally biased toward polar residues; that stretch reads PQNSSFRSTI.

This sequence belongs to the NIBP family. In terms of assembly, may be part of the multisubunit TRAPP (transport protein particle) complex.

The protein resides in the cytoplasm. The protein localises to the golgi apparatus. Cooperates with Rab11 and fwd/PI4K to mediate the flow of membrane through the Golgi, which is required to support cleavage furrow ingression, therefore promoting cytokinesis in male meiotic cells. The chain is Protein brunelleschi from Drosophila melanogaster (Fruit fly).